Consider the following 64-residue polypeptide: Large ribosomal subunit protein uL29 (64 aa).

The protein belongs to the universal ribosomal protein uL29 family.

The sequence is that of Large ribosomal subunit protein uL29 from Nitratiruptor sp. (strain SB155-2).